The sequence spans 786 residues: DNA repair and recombination protein RAD54-like (786 aa).

The required for chromatin remodeling, strand pairing activities and coupling of ATPase activity stretch occupies residues 2 to 9; that stretch reads RRSLAPSQ. At Thr22 the chain carries Phosphothreonine. Residues 165-340 enclose the Helicase ATP-binding domain; the sequence is EGKRGSFNGC…FSLVNFVNPE (176 aa). 178–185 lines the ATP pocket; that stretch reads DEMGLGKT. The DEGH box motif lies at 291 to 294; it reads DEGH. The region spanning 497-654 is the Helicase C-terminal domain; it reads LLDFMLAAIR…NNESVEKHFT (158 aa). A disordered region spans residues 738 to 786; that stretch reads EAKPAATTTDEDEELSDSKRKAKKTLASDDDDDEDFVLNCSSGEEFSGF. The span at 776-786 shows a compositional bias: polar residues; the sequence is NCSSGEEFSGF.

Belongs to the SNF2/RAD54 helicase family. As to quaternary structure, interacts (via N-terminus) with spn-A/Rad51.

It localises to the nucleus. In terms of biological role, involved in mitotic DNA repair and meiotic recombination. Functions in the recombinational DNA repair pathway. Essential for interhomolog gene conversion (GC), but may have a less important role in intersister GC than spn-A/Rad51. In the presence of DNA, spn-A/Rad51 enhances the ATPase activity of okr/Rad54. The polypeptide is DNA repair and recombination protein RAD54-like (Drosophila grimshawi (Hawaiian fruit fly)).